The following is a 647-amino-acid chain: DNA mismatch repair protein MutL (647 aa).

A compositionally biased stretch (basic and acidic residues) spans 387–400 (SAKPVHEATDEKAE). Residues 387–412 (SAKPVHEATDEKAEPQSTSVKFAERK) are disordered.

The protein belongs to the DNA mismatch repair MutL/HexB family.

In terms of biological role, this protein is involved in the repair of mismatches in DNA. It is required for dam-dependent methyl-directed DNA mismatch repair. May act as a 'molecular matchmaker', a protein that promotes the formation of a stable complex between two or more DNA-binding proteins in an ATP-dependent manner without itself being part of a final effector complex. In Streptococcus sanguinis (strain SK36), this protein is DNA mismatch repair protein MutL.